Here is a 145-residue protein sequence, read N- to C-terminus: Peptide methionine sulfoxide reductase MsrB (145 aa).

Residues 6-129 form the MsrB domain; sequence KNERLQQLTD…NSAALRFIPV (124 aa). The active-site Nucleophile is cysteine 118.

This sequence belongs to the MsrB Met sulfoxide reductase family.

The enzyme catalyses L-methionyl-[protein] + [thioredoxin]-disulfide + H2O = L-methionyl-(R)-S-oxide-[protein] + [thioredoxin]-dithiol. The chain is Peptide methionine sulfoxide reductase MsrB from Listeria monocytogenes serotype 4a (strain HCC23).